The sequence spans 83 residues: Cytochrome b559 subunit alpha (83 aa).

Residues 21–35 (VIHSITIPSLFIAGW) form a helical membrane-spanning segment. Residue His-23 coordinates heme.

The protein belongs to the PsbE/PsbF family. In terms of assembly, heterodimer of an alpha subunit and a beta subunit. PSII is composed of 1 copy each of membrane proteins PsbA, PsbB, PsbC, PsbD, PsbE, PsbF, PsbH, PsbI, PsbJ, PsbK, PsbL, PsbM, PsbT, PsbX, PsbY, PsbZ, Psb30/Ycf12, at least 3 peripheral proteins of the oxygen-evolving complex and a large number of cofactors. It forms dimeric complexes. Requires heme b as cofactor.

Its subcellular location is the plastid. The protein resides in the chloroplast thylakoid membrane. In terms of biological role, this b-type cytochrome is tightly associated with the reaction center of photosystem II (PSII). PSII is a light-driven water:plastoquinone oxidoreductase that uses light energy to abstract electrons from H(2)O, generating O(2) and a proton gradient subsequently used for ATP formation. It consists of a core antenna complex that captures photons, and an electron transfer chain that converts photonic excitation into a charge separation. The protein is Cytochrome b559 subunit alpha of Panax ginseng (Korean ginseng).